A 161-amino-acid chain; its full sequence is Epithelial membrane protein 2 (161 aa).

A run of 4 helical transmembrane segments spans residues 1-21 (MLVI…LLFI), 67-87 (TMIL…LQLF), 95-115 (FVFT…GASI), and 137-157 (FVVA…YLVL).

It belongs to the PMP-22/EMP/MP20 family. In terms of tissue distribution, expressed in the arches, orbits, pectoral fins, vessels, pronephric renal tubules, and glomeruli.

The protein localises to the golgi apparatus membrane. It localises to the cell membrane. It is found in the apical cell membrane. The protein resides in the membrane raft. Its subcellular location is the cytoplasm. The protein localises to the nucleus. It localises to the perinuclear region. Functionally, functions as a key regulator of cell membrane composition by regulating protein surface expression. Also, plays a role in regulation of processes including cell migration, cell proliferation, cell contraction and cell adhesion. May play a role in glomerular filtration. This is Epithelial membrane protein 2 (emp2) from Danio rerio (Zebrafish).